Consider the following 311-residue polypeptide: Probable dihydroorotate dehydrogenase A (fumarate) (311 aa).

Substrate contacts are provided by residues K45, 69–73, and N128; that span reads NSMGL. 45 to 46 contributes to the FMN binding site; the sequence is KT. N128 contacts FMN. C131 (nucleophile) is an active-site residue. Residues K165 and V193 each coordinate FMN. Residue 194-195 coordinates substrate; that stretch reads NS. FMN-binding positions include G220, 248-249, and 270-271; these read GG and GT.

The protein belongs to the dihydroorotate dehydrogenase family. Type 1 subfamily. In terms of assembly, homodimer. It depends on FMN as a cofactor.

It is found in the cytoplasm. It catalyses the reaction (S)-dihydroorotate + fumarate = orotate + succinate. The protein operates within pyrimidine metabolism; UMP biosynthesis via de novo pathway. Functionally, catalyzes the conversion of dihydroorotate to orotate with fumarate as the electron acceptor. The sequence is that of Probable dihydroorotate dehydrogenase A (fumarate) (pyrDA) from Streptococcus pneumoniae serotype 4 (strain ATCC BAA-334 / TIGR4).